We begin with the raw amino-acid sequence, 537 residues long: Glucans biosynthesis protein D 2 (537 aa).

The segment at residues 1 to 28 (MVTRRHLLASASLSATLAALGITPEALA) is a signal peptide (tat-type signal).

This sequence belongs to the OpgD/OpgG family. Predicted to be exported by the Tat system. The position of the signal peptide cleavage has not been experimentally proven.

It is found in the periplasm. It functions in the pathway glycan metabolism; osmoregulated periplasmic glucan (OPG) biosynthesis. Its function is as follows. Probably involved in the control of the structural glucose backbone of osmoregulated periplasmic glucans (OPGs). The sequence is that of Glucans biosynthesis protein D 2 (opgD2) from Ralstonia nicotianae (strain ATCC BAA-1114 / GMI1000) (Ralstonia solanacearum).